The sequence spans 82 residues: Large ribosomal subunit protein bL28 (82 aa).

It belongs to the bacterial ribosomal protein bL28 family.

This chain is Large ribosomal subunit protein bL28, found in Vesicomyosocius okutanii subsp. Calyptogena okutanii (strain HA).